Consider the following 1391-residue polypeptide: DNA-directed RNA polymerase subunit beta' (1391 aa).

The Zn(2+) site is built by Cys72, Cys74, Cys87, and Cys90. The Mg(2+) site is built by Asp462, Asp464, and Asp466. 4 residues coordinate Zn(2+): Cys816, Cys890, Cys897, and Cys900.

The protein belongs to the RNA polymerase beta' chain family. The RNAP catalytic core consists of 2 alpha, 1 beta, 1 beta' and 1 omega subunit. When a sigma factor is associated with the core the holoenzyme is formed, which can initiate transcription. Requires Mg(2+) as cofactor. Zn(2+) is required as a cofactor.

The enzyme catalyses RNA(n) + a ribonucleoside 5'-triphosphate = RNA(n+1) + diphosphate. In terms of biological role, DNA-dependent RNA polymerase catalyzes the transcription of DNA into RNA using the four ribonucleoside triphosphates as substrates. The polypeptide is DNA-directed RNA polymerase subunit beta' (Neisseria gonorrhoeae (strain ATCC 700825 / FA 1090)).